Reading from the N-terminus, the 258-residue chain is Indole-3-glycerol phosphate synthase (258 aa).

The protein belongs to the TrpC family.

The catalysed reaction is 1-(2-carboxyphenylamino)-1-deoxy-D-ribulose 5-phosphate + H(+) = (1S,2R)-1-C-(indol-3-yl)glycerol 3-phosphate + CO2 + H2O. It functions in the pathway amino-acid biosynthesis; L-tryptophan biosynthesis; L-tryptophan from chorismate: step 4/5. This chain is Indole-3-glycerol phosphate synthase, found in Endomicrobium trichonymphae.